We begin with the raw amino-acid sequence, 204 residues long: MAAVILERLGALWVQNLRGKLALGILPQSHIHTSASLEISRKWEKKNKIVYPPQLPGEPRRPAEIYHCRRQIKYSKDKMWYLAKLIRGMSIDQALAQLEFSDKKGAQIIKEVLLEAQDMAVRDHNVEFRSNLYIAESTSGRGQYLKRIRYHGRGRFGIMEKVFCHYFVKLVEGPPPPPEAPKTAVTHAKEYIQELRNRTIIHAL.

The N-terminal 38 residues, 1–38 (MAAVILERLGALWVQNLRGKLALGILPQSHIHTSASLE), are a transit peptide targeting the mitochondrion.

Belongs to the universal ribosomal protein uL22 family. Component of the mitochondrial ribosome large subunit (39S) which comprises a 16S rRNA and about 50 distinct proteins.

Its subcellular location is the mitochondrion. This is Large ribosomal subunit protein uL22m (MRPL22) from Bos taurus (Bovine).